The sequence spans 1095 residues: Putative patatin-like phospholipase domain-containing protein M110.7 (1095 aa).

A helical membrane pass occupies residues 9 to 29; it reads LLLIFENILELCMCITLVILI. Residues 75–113 form a disordered region; that stretch reads HKKRSSKEEMTPDKKRDSSEKISKQPPRELFEPNEQEQV. Basic and acidic residues predominate over residues 80-105; that stretch reads SKEEMTPDKKRDSSEKISKQPPRELF. A nucleoside 3',5'-cyclic phosphate is bound by residues 144-237, 327-416, and 450-509; these read VETL…LTSF, RKYE…IQFL, and IETG…TVMA. A PNPLA domain is found at 768–935; that stretch reads IVFGGGGARG…VNNLPADIMR (168 aa). The GXGXXG signature appears at 772–777; it reads GGGARG. The GXSXG signature appears at 799 to 803; that stretch reads GTSIG. Serine 801 acts as the Nucleophile in catalysis. The Proton acceptor role is filled by aspartate 922. The DGA/G signature appears at 922–924; it reads DGA.

It belongs to the NTE family.

The protein resides in the membrane. The chain is Putative patatin-like phospholipase domain-containing protein M110.7 from Caenorhabditis elegans.